We begin with the raw amino-acid sequence, 403 residues long: Large ribosomal subunit protein uL3 (403 aa).

The disordered stretch occupies residues 1-37 (MSHRKFSAPRHGSLGFLPRKRSSRHRGKVKSFPKDDP). Residue serine 13 is modified to Phosphoserine. Over residues 18–31 (PRKRSSRHRGKVKS) the composition is skewed to basic residues. Residue lysine 39 forms a Glycyl lysine isopeptide (Lys-Gly) (interchain with G-Cter in SUMO2) linkage. An N6-acetyllysine modification is found at lysine 136. Residues lysine 224 and lysine 226 each participate in a glycyl lysine isopeptide (Lys-Gly) (interchain with G-Cter in SUMO2) cross-link. The residue at position 245 (histidine 245) is a Tele-methylhistidine. An N6-acetyllysine; alternate mark is found at lysine 286 and lysine 294. Lysine 286 participates in a covalent cross-link: Glycyl lysine isopeptide (Lys-Gly) (interchain with G-Cter in SUMO2); alternate. Lysine 294 is covalently cross-linked (Glycyl lysine isopeptide (Lys-Gly) (interchain with G-Cter in SUMO1); alternate). Serine 304 is subject to Phosphoserine. N6-acetyllysine; alternate is present on lysine 366. A Glycyl lysine isopeptide (Lys-Gly) (interchain with G-Cter in SUMO2); alternate cross-link involves residue lysine 366. The residue at position 373 (lysine 373) is an N6-acetyllysine. Residues lysine 386, lysine 393, and lysine 399 each participate in a glycyl lysine isopeptide (Lys-Gly) (interchain with G-Cter in SUMO2) cross-link.

Belongs to the universal ribosomal protein uL3 family. In terms of assembly, component of the large ribosomal subunit. Interacts with DHX33. In terms of processing, constitutively monomethylated at His-245 by METTL18. Methylation at His-245 regulates translation elongation by slowing ribosome traversal on tyrosine codons: slower elongation provides enough time for proper folding of synthesized proteins and prevents cellular aggregation of tyrosine-rich proteins. It is not required for incorporation of RPL3 into ribosomes.

Its subcellular location is the nucleus. The protein resides in the nucleolus. It localises to the cytoplasm. Its function is as follows. Component of the large ribosomal subunit. The ribosome is a large ribonucleoprotein complex responsible for the synthesis of proteins in the cell. The protein is Large ribosomal subunit protein uL3 (RPL3) of Oryctolagus cuniculus (Rabbit).